The chain runs to 404 residues: 2,3-bisphosphoglycerate-independent phosphoglycerate mutase (404 aa).

A disordered region spans residues 155 to 183 (LSDMIGDSDPHREGLPPEKIRPTDPSGDR). Residues 162 to 183 (SDPHREGLPPEKIRPTDPSGDR) are compositionally biased toward basic and acidic residues.

The protein belongs to the BPG-independent phosphoglycerate mutase family. A-PGAM subfamily.

It carries out the reaction (2R)-2-phosphoglycerate = (2R)-3-phosphoglycerate. Its pathway is carbohydrate degradation; glycolysis; pyruvate from D-glyceraldehyde 3-phosphate: step 3/5. In terms of biological role, catalyzes the interconversion of 2-phosphoglycerate and 3-phosphoglycerate. The chain is 2,3-bisphosphoglycerate-independent phosphoglycerate mutase from Thermoplasma acidophilum (strain ATCC 25905 / DSM 1728 / JCM 9062 / NBRC 15155 / AMRC-C165).